The primary structure comprises 375 residues: Growth/differentiation factor 8 (375 aa).

The first 23 residues, 1–23, serve as a signal peptide directing secretion; sequence MQKLAVYVYIYLFVQISVDPVAL. A propeptide spanning residues 24-266 is cleaved from the precursor; that stretch reads DGSSQPTENT…VTDTPKRSRR (243 aa). An N-linked (GlcNAc...) asparagine glycan is attached at N71. Intrachain disulfides connect C272/C282, C281/C340, C309/C372, and C313/C374.

It belongs to the TGF-beta family. In terms of assembly, homodimer; disulfide-linked.

It is found in the secreted. Functionally, acts specifically as a negative regulator of skeletal muscle growth. The sequence is that of Growth/differentiation factor 8 (MSTN) from Excalfactoria chinensis (Blue-breasted quail).